The sequence spans 1221 residues: DNA-directed RNA polymerase subunit beta' (1221 aa).

Residues Cys-60, Cys-62, Cys-75, and Cys-78 each contribute to the Zn(2+) site. Mg(2+) is bound by residues Asp-449, Asp-451, and Asp-453. 4 residues coordinate Zn(2+): Cys-821, Cys-896, Cys-903, and Cys-906.

This sequence belongs to the RNA polymerase beta' chain family. As to quaternary structure, the RNAP catalytic core consists of 2 alpha, 1 beta, 1 beta' and 1 omega subunit. When a sigma factor is associated with the core the holoenzyme is formed, which can initiate transcription. Mg(2+) is required as a cofactor. It depends on Zn(2+) as a cofactor.

It catalyses the reaction RNA(n) + a ribonucleoside 5'-triphosphate = RNA(n+1) + diphosphate. DNA-dependent RNA polymerase catalyzes the transcription of DNA into RNA using the four ribonucleoside triphosphates as substrates. The polypeptide is DNA-directed RNA polymerase subunit beta' (Lactobacillus delbrueckii subsp. bulgaricus (strain ATCC 11842 / DSM 20081 / BCRC 10696 / JCM 1002 / NBRC 13953 / NCIMB 11778 / NCTC 12712 / WDCM 00102 / Lb 14)).